A 368-amino-acid chain; its full sequence is MITLEVDLGERSYPIHIGSGLLDNAELLRPHVRGQHAVIVTNETVGPLYAARVEQALAALGKTVRTVTLPDGEAFKHWETLNRIFDALLQAGADRKTTLVALGGGVVGDMTGFAAACYMRGVPFIQMPTTLLAQVDSSVGGKTGINHPLGKNMIGAFHQPNAVIADIDTLRTLPPRELAAGMAEVIKHGAIADADYFAWIERNIQALNACDPELMAVAVQRSCEIKAGVVAQDEREGGLRAILNFGHTFGHAIEAGMGYGAWLHGEAVGCGMVMAADLSHRLGFIDIETLARVRTLTQAAMLPVVAPELGADRYIELMKVDKKAEAGSIKFILLKKLGEAFITSVPDADLRATLAHAVLKPPTEAPVA.

NAD(+) is bound by residues 71–76, 105–109, 129–130, Lys142, Lys151, and 169–172; these read DGEAFK, GVVGD, TT, and TLRT. Residues Glu184, His247, and His264 each coordinate Zn(2+).

It belongs to the sugar phosphate cyclases superfamily. Dehydroquinate synthase family. Requires Co(2+) as cofactor. Zn(2+) serves as cofactor. It depends on NAD(+) as a cofactor.

It is found in the cytoplasm. It carries out the reaction 7-phospho-2-dehydro-3-deoxy-D-arabino-heptonate = 3-dehydroquinate + phosphate. The protein operates within metabolic intermediate biosynthesis; chorismate biosynthesis; chorismate from D-erythrose 4-phosphate and phosphoenolpyruvate: step 2/7. Functionally, catalyzes the conversion of 3-deoxy-D-arabino-heptulosonate 7-phosphate (DAHP) to dehydroquinate (DHQ). The polypeptide is 3-dehydroquinate synthase (Cupriavidus taiwanensis (strain DSM 17343 / BCRC 17206 / CCUG 44338 / CIP 107171 / LMG 19424 / R1) (Ralstonia taiwanensis (strain LMG 19424))).